Consider the following 1289-residue polypeptide: Pesticidal crystal protein Cry5Ab (1289 aa).

Residues 1263–1289 form a disordered region; it reads PLPTDDQNSEGNTASSTNSDTSMNNNQ. A compositionally biased stretch (low complexity) spans 1274 to 1289; the sequence is NTASSTNSDTSMNNNQ.

The protein belongs to the delta endotoxin family.

Its function is as follows. Endotoxin with nematicidal activity. In Bacillus thuringiensis subsp. darmstadiensis, this protein is Pesticidal crystal protein Cry5Ab (cry5Ab).